Here is a 177-residue protein sequence, read N- to C-terminus: Ribonuclease alpha-sarcin (177 aa).

An N-terminal signal peptide occupies residues 1–27 (MVAIKNLVLVALTAVTALAVPSPLEAR). 2 disulfide bridges follow: C33-C175 and C103-C159. H77 is an active-site residue. Positions 86–119 (DGKLPKGRTPIKFGKSDCDRPPKHSKDGNGKTDH) are disordered. Over residues 99-119 (GKSDCDRPPKHSKDGNGKTDH) the composition is skewed to basic and acidic residues. E123 (proton acceptor) is an active-site residue. H164 acts as the Proton donor in catalysis.

The protein belongs to the ribonuclease U2 family.

It localises to the secreted. The enzyme catalyses a 28S rRNA containing guanosine-adenosine pair + H2O = an [RNA fragment]-3'-adenosine-3'-phosphate + a 5'-a hydroxy-guanosine-3'-[RNA fragment].. Alpha-sarcin is specific for purines in both single- and double-stranded RNA. Its toxic action on eukaryotic cells is the result of cleavage of a single phosphodiester bond in the 60S subunit of ribosomes. Inhibits both the EFl (elongation factor 1)-dependent binding of aminoacyl-tRNA and the GTP-dependent binding of EF2 (elongation factor 2) to ribosomes. The chain is Ribonuclease alpha-sarcin (sar) from Aspergillus giganteus.